Consider the following 449-residue polypeptide: UDP-glycosyltransferase 76E6 (449 aa).

UDP-alpha-D-glucose is bound by residues S274, 333–335 (APQ), 350–358 (HCGWNSTLE), and 372–375 (HGEQ).

It belongs to the UDP-glycosyltransferase family.

The protein is UDP-glycosyltransferase 76E6 (UGT76E6) of Arabidopsis thaliana (Mouse-ear cress).